A 2026-amino-acid polypeptide reads, in one-letter code: Fatty acid synthase subunit beta (2026 aa).

The interval 148-526 is acetyltransferase (AT) domain; the sequence is ILMAFGGQGS…VDGRGVRIIA (379 aa). The active-site For acetyltransferase activity is S268. The tract at residues 579 to 824 is enoyl reductase (ER) domain; the sequence is SQLLQAPPII…LILAAAGVAD (246 aa). The tract at residues 1130 to 1604 is dehydratase (DH) domain; the sequence is SQVTGSVRSA…LPGDQLTVRI (475 aa). Residues 1512–1625 enclose the MaoC-like domain; it reads PGLIDNGSRT…LSVAAYREGT (114 aa). The malonyl/palmitoyl transferase (MT/PT) domain stretch occupies residues 1643 to 2016; sequence YLFTGQGSQA…LEEAAAVTGS (374 aa). The active-site For malonyltransferase activity is the S1788.

Belongs to the fungal fatty acid synthetase subunit beta family. [Alpha(6)beta(6)] hexamers of two multifunctional subunits (alpha and beta).

It carries out the reaction acetyl-CoA + n malonyl-CoA + 2n NADPH + 4n H(+) = a long-chain-acyl-CoA + n CoA + n CO2 + 2n NADP(+).. It catalyses the reaction holo-[ACP] + acetyl-CoA = acetyl-[ACP] + CoA. The enzyme catalyses holo-[ACP] + malonyl-CoA = malonyl-[ACP] + CoA. The catalysed reaction is a (3R)-hydroxyacyl-[ACP] = a (2E)-enoyl-[ACP] + H2O. It carries out the reaction a 2,3-saturated acyl-[ACP] + NAD(+) = a (2E)-enoyl-[ACP] + NADH + H(+). It catalyses the reaction (9Z)-octadecenoyl-[ACP] + H2O = (9Z)-octadecenoate + holo-[ACP] + H(+). The protein operates within secondary metabolite biosynthesis. Its function is as follows. Fatty acid synthase beta subunit; part of the gene cluster that mediates the biosynthesis of oryzines, natural products with an unusual maleidride backbone. The two subunits of the fungal fatty acid synthase oryfasA and oryfasB probably form octenoic acid. This fatty acid is most likely activated by the acyl-CoA ligase oryP to give octenyl-CoA before the citrate synthase-like protein oryE catalyzes condensation with oxaloacetate to form tricarboxylic acid. The next steps of the pathways are conjectural, but a favorite possible route has been proposed, beginning with decarboxylation and concomitant dehydration by the decarboxylase oryM, followed by tautomerization, which may lead to the production of a diene intermediate. Reduction of this diene intermediate could give the known metabolite piliformic acid. On the pathway to oryzine B and oryzine A, however, hydroxylation of the diene by the alpha-ketoglutarate-dependent dioxygenase oryG and lactonisation by the lactonohydrolases oryH or oryL could give oryzine B directly. Finally, enoyl reduction by the dehydrogenase oryD would then convert oryzine B into oryzine A. This is Fatty acid synthase subunit beta from Aspergillus oryzae (strain ATCC 42149 / RIB 40) (Yellow koji mold).